Here is a 563-residue protein sequence, read N- to C-terminus: Pre-hexon-linking protein IIIa (563 aa).

The tract at residues 1-117 (MRKRRTLTAP…ALLHRVSKYN (117 aa)) is peripentonal hexon-tethering domain. Residues 148 to 261 (GSLTALNSFL…FTDSVSISRD (114 aa)) are binding to hexon-linking protein. Serine 235 is subject to Phosphoserine; by host. Phosphothreonine; by host is present on threonine 284. The tract at residues 449–471 (RTESRSVSRVPTPASSRRSSVAM) is disordered. Residues serine 452 and serine 456 each carry the phosphoserine; by host modification. A compositionally biased stretch (low complexity) spans 462–471 (ASSRRSSVAM). Serine 475 and serine 486 each carry phosphoserine; by host. The segment at 524-543 (SSAISSDESDDGMSKPDKFL) is disordered. A propeptide spanning residues 549–563 (GNPFAHLRPKLGRCL) is cleaved from the precursor.

This sequence belongs to the adenoviridae hexon-linking protein IIIa family. In terms of assembly, interacts with hexon proteins; this interaction tethers the peripentonal hexons to hexons situated in the facet. Interacts with the penton protein (via N-terminus). Interacts with packaging protein 3; this interaction is required to promote correct genome packaging. Cleaved near the C-terminus by the viral protease during virion maturation to form the mature protein.

It localises to the virion. The protein resides in the host nucleus. Structural component of the virion that acts as a cement protein on the capsid exterior which mediates the interactions between the hexons, including the peripentonal hexons, and reaches all the way to the penton vertices. Two hexon linking proteins IIIa, one from each facet, stabilize the unique edge interface between a pair of facets. As the virus enters the host cell, hexon linking proteins IIIa are shed concomitant with virion acidification in the endosome. During virus assembly, seems to play a role in the serotype specificity of the packaging of viral DNA via its interaction with packaging protein 3. The polypeptide is Pre-hexon-linking protein IIIa (Canis lupus familiaris (Dog)).